A 574-amino-acid chain; its full sequence is Transmembrane glycoprotein NMB (574 aa).

Residues 1–22 (MESLCGVLGFLLLAAGLPLQAA) form the signal peptide. Over 23–502 (KRFRDVLGHE…DPDSPLRAVN (480 aa)) the chain is Extracellular. N-linked (GlcNAc...) asparagine glycans are attached at residues N93, N134, N200, N249, N275, N296, N300, N306, and N312. The PKD domain maps to 250–338 (LSDEIFLRDL…STPPPPSTPP (89 aa)). The tract at residues 320-353 (PGPCPPPSPSTPPPPSTPPSPPPSPLPTLSTPSP) is disordered. The segment covering 321–345 (GPCPPPSPSTPPPPSTPPSPPPSPL) has biased composition (pro residues). Residues N463 and N471 are each glycosylated (N-linked (GlcNAc...) asparagine). Residues 503 to 523 (GVLISIGCLAVLVTMVTILLY) form a helical membrane-spanning segment. At 524 to 574 (KKHKAYKPIGNCPRNTVKGKGLSVLLSHAKAPFFRGDQEKDPLLQDKPRTL) the chain is on the cytoplasmic side. A Phosphoserine modification is found at S546. Positions 558–560 (RGD) match the Cell attachment site motif.

The protein belongs to the PMEL/NMB family. As to expression, may be up-regulated in bone metastatic breast cancer cells.

It is found in the cell membrane. Its subcellular location is the melanosome membrane. The protein resides in the early endosome membrane. Its function is as follows. Could be a melanogenic enzyme. The protein is Transmembrane glycoprotein NMB (Gpnmb) of Mus musculus (Mouse).